We begin with the raw amino-acid sequence, 451 residues long: tRNA(Ile)-lysidine synthase (451 aa).

Serine 21–serine 26 is a binding site for ATP.

The protein belongs to the tRNA(Ile)-lysidine synthase family.

The protein resides in the cytoplasm. It catalyses the reaction cytidine(34) in tRNA(Ile2) + L-lysine + ATP = lysidine(34) in tRNA(Ile2) + AMP + diphosphate + H(+). In terms of biological role, ligates lysine onto the cytidine present at position 34 of the AUA codon-specific tRNA(Ile) that contains the anticodon CAU, in an ATP-dependent manner. Cytidine is converted to lysidine, thus changing the amino acid specificity of the tRNA from methionine to isoleucine. The polypeptide is tRNA(Ile)-lysidine synthase (Yersinia pseudotuberculosis serotype O:1b (strain IP 31758)).